Reading from the N-terminus, the 352-residue chain is Isoflavone-7-O-methyltransferase 9 (352 aa).

Residue 118 to 127 participates in substrate binding; it reads VLDPTLSGSY. Positions 196, 219, 239, 240, and 253 each coordinate S-adenosyl-L-methionine. Catalysis depends on histidine 257, which acts as the Proton acceptor.

It belongs to the class I-like SAM-binding methyltransferase superfamily. Cation-independent O-methyltransferase family. COMT subfamily. As to quaternary structure, homodimer.

The enzyme catalyses a 7-hydroxyisoflavone + S-adenosyl-L-methionine = a 7-methoxyisoflavone + S-adenosyl-L-homocysteine + H(+). It participates in phytoalexin biosynthesis; medicarpin biosynthesis. Functionally, transfers a methyl group to 7-hydroxyls of the isoflavones daidzein, genistein and 6,7,4'-trihydroxyisoflavone. Can also methylate (+)6a-hydroxymaackiain with lower efficiency. This is Isoflavone-7-O-methyltransferase 9 from Medicago sativa (Alfalfa).